The chain runs to 551 residues: Meiotically up-regulated gene 184 protein (551 aa).

Residues 12–78 (DYYAILKLQK…TKRLIYDQLF (67 aa)) form the J domain. The segment covering 85-122 (RSQYKPNSTSNPSKHTSAYASYNKGKNSKWSSPFASTT) has biased composition (polar residues). Disordered regions lie at residues 85–153 (RSQY…FPRD), 176–226 (RQEP…SVYK), and 334–359 (EAES…TRNN). Residues 124–133 (KPQESSEKYS) show a composition bias toward basic and acidic residues. Basic residues predominate over residues 134-146 (KKSSTRKKEHFNK). 2 stretches are compositionally biased toward basic and acidic residues: residues 176–187 (RQEPESLKKENN) and 203–219 (GPKD…KIPE).

It is found in the cytoplasm. Its subcellular location is the cytoskeleton. In terms of biological role, has a role in sporulation. The chain is Meiotically up-regulated gene 184 protein (mug184) from Schizosaccharomyces pombe (strain 972 / ATCC 24843) (Fission yeast).